Consider the following 41-residue polypeptide: Large ribosomal subunit protein bL36B (41 aa).

The protein belongs to the bacterial ribosomal protein bL36 family.

The protein is Large ribosomal subunit protein bL36B of Vibrio campbellii (strain ATCC BAA-1116).